The sequence spans 85 residues: Large ribosomal subunit protein bL27 (85 aa).

Over residues 1–10 (MAQKKGGGST) the composition is skewed to gly residues. The tract at residues 1–20 (MAQKKGGGSTRNGRDSQPKM) is disordered.

Belongs to the bacterial ribosomal protein bL27 family.

This chain is Large ribosomal subunit protein bL27, found in Methylibium petroleiphilum (strain ATCC BAA-1232 / LMG 22953 / PM1).